Here is a 398-residue protein sequence, read N- to C-terminus: 1-deoxy-D-xylulose 5-phosphate reductoisomerase (398 aa).

Thr10, Gly11, Ser12, Ile13, Asn38, and Asn124 together coordinate NADPH. Lys125 contacts 1-deoxy-D-xylulose 5-phosphate. Glu126 contributes to the NADPH binding site. Position 150 (Asp150) interacts with Mn(2+). 1-deoxy-D-xylulose 5-phosphate is bound by residues Ser151, Glu152, Ser186, and His209. A Mn(2+)-binding site is contributed by Glu152. An NADPH-binding site is contributed by Gly215. Positions 222, 227, 228, and 231 each coordinate 1-deoxy-D-xylulose 5-phosphate. Glu231 is a binding site for Mn(2+).

Belongs to the DXR family. Mg(2+) serves as cofactor. Mn(2+) is required as a cofactor.

It carries out the reaction 2-C-methyl-D-erythritol 4-phosphate + NADP(+) = 1-deoxy-D-xylulose 5-phosphate + NADPH + H(+). The protein operates within isoprenoid biosynthesis; isopentenyl diphosphate biosynthesis via DXP pathway; isopentenyl diphosphate from 1-deoxy-D-xylulose 5-phosphate: step 1/6. Its function is as follows. Catalyzes the NADPH-dependent rearrangement and reduction of 1-deoxy-D-xylulose-5-phosphate (DXP) to 2-C-methyl-D-erythritol 4-phosphate (MEP). This Baumannia cicadellinicola subsp. Homalodisca coagulata protein is 1-deoxy-D-xylulose 5-phosphate reductoisomerase.